The following is a 1046-amino-acid chain: Nuclear pore complex protein NUP96 (1046 aa).

Positions 51–187 (SPDYFLKPCI…GLWKFFVPHF (137 aa)) constitute a Peptidase S59 domain. Over residues 283–295 (RNVRPSQKIAQRN) the composition is skewed to polar residues. The interval 283 to 304 (RNVRPSQKIAQRNSHQDPPPVV) is disordered. Residue serine 523 is modified to Phosphoserine.

Part of the nuclear pore complex (NPC). The NPC has an eight-fold symmetrical structure comprising a central transport channel and two rings, the cytoplasmic and nuclear rings, to which eight filaments are attached. The cytoplasmic filaments have loose ends, while the nuclear filaments are joined in a distal ring, forming a nuclear basket. NPCs are highly dynamic in configuration and composition, and can be devided in 3 subcomplexes, the NUP62 subcomplex, the NUP107-160 subcomplex and the NUP93 subcomplex, containing approximately 30 different nucleoporin proteins. As to expression, expressed in roots, leaves, stems, flowers and siliques.

Its subcellular location is the nucleus membrane. It is found in the nucleus. It localises to the nuclear pore complex. Contributes to the transfer of mature mRNA from the nucleus to the cytosol. Required for both R gene-mediated and basal disease resistance. RNA export seems to play a critical role in stress responses and regulation of plant growth and development. In Arabidopsis thaliana (Mouse-ear cress), this protein is Nuclear pore complex protein NUP96.